Consider the following 89-residue polypeptide: Small ribosomal subunit protein uS15 (89 aa).

This sequence belongs to the universal ribosomal protein uS15 family. In terms of assembly, part of the 30S ribosomal subunit. Forms a bridge to the 50S subunit in the 70S ribosome, contacting the 23S rRNA.

Its function is as follows. One of the primary rRNA binding proteins, it binds directly to 16S rRNA where it helps nucleate assembly of the platform of the 30S subunit by binding and bridging several RNA helices of the 16S rRNA. Forms an intersubunit bridge (bridge B4) with the 23S rRNA of the 50S subunit in the ribosome. In Saccharophagus degradans (strain 2-40 / ATCC 43961 / DSM 17024), this protein is Small ribosomal subunit protein uS15.